Consider the following 32-residue polypeptide: NGWNENKNYILIGSAAWAGLVLLVGTLNYLVI.

Residues 12–32 (IGSAAWAGLVLLVGTLNYLVI) traverse the membrane as a helical segment.

The protein belongs to the PsbZ family. PSII is composed of 1 copy each of membrane proteins PsbA, PsbB, PsbC, PsbD, PsbE, PsbF, PsbH, PsbI, PsbJ, PsbK, PsbL, PsbM, PsbT, PsbY, PsbZ, Psb30/Ycf12, at least 3 peripheral proteins of the oxygen-evolving complex and a large number of cofactors. It forms dimeric complexes.

It localises to the plastid. The protein resides in the chloroplast thylakoid membrane. Functionally, may control the interaction of photosystem II (PSII) cores with the light-harvesting antenna, regulates electron flow through the 2 photosystem reaction centers. PSII is a light-driven water plastoquinone oxidoreductase, using light energy to abstract electrons from H(2)O, generating a proton gradient subsequently used for ATP formation. The chain is Photosystem II reaction center protein Z from Euglena anabaena (Euglenaria anabaena).